Here is a 173-residue protein sequence, read N- to C-terminus: Transcription factor E (173 aa).

The HTH TFE/IIEalpha-type domain maps to proline 6 to asparagine 89.

Belongs to the TFE family. In terms of assembly, monomer. Interaction with RNA polymerase subunits RpoF and RpoE is necessary for Tfe stimulatory transcription activity. Able to interact with Tbp and RNA polymerase in the absence of DNA promoter. Interacts both with the preinitiation and elongation complexes.

In terms of biological role, transcription factor that plays a role in the activation of archaeal genes transcribed by RNA polymerase. Facilitates transcription initiation by enhancing TATA-box recognition by TATA-box-binding protein (Tbp), and transcription factor B (Tfb) and RNA polymerase recruitment. Not absolutely required for transcription in vitro, but particularly important in cases where Tbp or Tfb function is not optimal. It dynamically alters the nucleic acid-binding properties of RNA polymerases by stabilizing the initiation complex and destabilizing elongation complexes. Seems to translocate with the RNA polymerase following initiation and acts by binding to the non template strand of the transcription bubble in elongation complexes. The polypeptide is Transcription factor E (Ignicoccus hospitalis (strain KIN4/I / DSM 18386 / JCM 14125)).